The following is a 212-amino-acid chain: N-acetyltransferase 9-like protein (212 aa).

Positions 34–201 (EEIREQTASE…INLLNLKNND (168 aa)) constitute an N-acetyltransferase domain.

It belongs to the acetyltransferase family. GNAT subfamily.

The protein is N-acetyltransferase 9-like protein (nat9) of Dictyostelium discoideum (Social amoeba).